Reading from the N-terminus, the 568-residue chain is Estrogen receptor beta-1 (568 aa).

Positions Ser-12–Tyr-169 are modulating. NR C4-type zinc fingers lie at residues Cys-170–Cys-190 and Cys-206–Cys-230. Residues Cys-170 to Met-235 constitute a DNA-binding region (nuclear receptor). In terms of domain architecture, NR LBD spans Ser-292–His-528.

This sequence belongs to the nuclear hormone receptor family. NR3 subfamily. In terms of assembly, binds DNA as a homodimer. Can form a heterodimer with ER-alpha.

It is found in the nucleus. Functionally, binds estrogens with an affinity similar to that of ER-alpha, and activates expression of reporter genes containing estrogen response elements (ERE) in an estrogen-dependent manner. This Carassius auratus (Goldfish) protein is Estrogen receptor beta-1 (esr2a).